The sequence spans 303 residues: Elongation factor Ts (303 aa).

The involved in Mg(2+) ion dislocation from EF-Tu stretch occupies residues 80-83 (TDFV).

It belongs to the EF-Ts family.

It localises to the cytoplasm. In terms of biological role, associates with the EF-Tu.GDP complex and induces the exchange of GDP to GTP. It remains bound to the aminoacyl-tRNA.EF-Tu.GTP complex up to the GTP hydrolysis stage on the ribosome. The protein is Elongation factor Ts of Clostridium perfringens (strain SM101 / Type A).